The chain runs to 141 residues: Large-conductance mechanosensitive channel (141 aa).

Transmembrane regions (helical) follow at residues 16–36 (VVDLAVGVIIGGAFGKIVSSM) and 83–103 (GNFIQTVIDFTILAFVIFLMV).

The protein belongs to the MscL family. In terms of assembly, homopentamer.

The protein localises to the cell inner membrane. Channel that opens in response to stretch forces in the membrane lipid bilayer. May participate in the regulation of osmotic pressure changes within the cell. This is Large-conductance mechanosensitive channel from Cytophaga hutchinsonii (strain ATCC 33406 / DSM 1761 / CIP 103989 / NBRC 15051 / NCIMB 9469 / D465).